Reading from the N-terminus, the 496-residue chain is GTPase Der (496 aa).

EngA-type G domains lie at 3 to 168 (PIIA…VPEK) and 210 to 383 (IKLA…DCST). Residues 9-16 (GRPNVGKS), 56-60 (DTGGI), 120-123 (NKID), 216-223 (GRPNVGKS), 263-267 (DTAGV), and 328-331 (NKWD) contribute to the GTP site. Positions 384-468 (KRINTSLLTR…PIRIQFKESE (85 aa)) constitute a KH-like domain.

This sequence belongs to the TRAFAC class TrmE-Era-EngA-EngB-Septin-like GTPase superfamily. EngA (Der) GTPase family. As to quaternary structure, associates with the 50S ribosomal subunit.

GTPase that plays an essential role in the late steps of ribosome biogenesis. The sequence is that of GTPase Der from Hamiltonella defensa subsp. Acyrthosiphon pisum (strain 5AT).